The following is an 83-amino-acid chain: UPF0512 protein G (83 aa).

This sequence belongs to the UPF0512 family.

The chain is UPF0512 protein G from Dictyostelium discoideum (Social amoeba).